The chain runs to 125 residues: Small ribosomal subunit protein uS12m (125 aa).

The interval 1–24 (MPTSNQSIRHGREKKRRTDRTRAL) is disordered. Residues 9–19 (RHGREKKRRTD) are compositionally biased toward basic residues.

The protein belongs to the universal ribosomal protein uS12 family.

Its subcellular location is the mitochondrion. Functionally, protein S12 is involved in the translation initiation step. This is Small ribosomal subunit protein uS12m (RPS12) from Pinus sylvestris (Scotch pine).